The primary structure comprises 157 residues: Small ribosomal subunit protein uS17 (157 aa).

Belongs to the universal ribosomal protein uS17 family.

This Dunaliella tertiolecta (Green alga) protein is Small ribosomal subunit protein uS17 (RPS11).